We begin with the raw amino-acid sequence, 98 residues long: Hainantoxin-XVII (98 aa).

An N-terminal signal peptide occupies residues 1 to 40 (MTTVGVSLFRRSPEKITMKIATFLGLSFLLIASYVLICEA). Residues 41 to 64 (QHPGFQELLILEENMRDPENSKER) constitute a propeptide that is removed on maturation. Disulfide bonds link C66–C81, C73–C85, and C80–C95.

It belongs to the hainantoxin family. 17 subfamily. In terms of tissue distribution, expressed by the venom gland.

Its subcellular location is the secreted. Putative ion channel inhibitor. The protein is Hainantoxin-XVII of Cyriopagopus hainanus (Chinese bird spider).